A 236-amino-acid chain; its full sequence is MGLGLGVRAAPFTYAAHALAVAAAAMVLVWAIYFRGGLAIEATNKNLIFNVHPVLMLIGYIIIGGEAIMVYRVLPTSNHETNKLIHLVLHGIALVLGAVGIYFAFKNHNESGIANLYSLHSWIGIGTITLYGIQWIVGFVTFFFPGAAPNVKKGVLPWHILFGLFVYILALANAELGFLEKLTFLESSGLDKYGTEAFLVNFTALVVVLFGASVVVAAIAPVRLEEPQGYVPIPEN.

Over 1-13 (MGLGLGVRAAPFT) the chain is Cytoplasmic. Residues 14 to 34 (YAAHALAVAAAAMVLVWAIYF) traverse the membrane as a helical segment. Residues 15–219 (AAHALAVAAA…FGASVVVAAI (205 aa)) form the Cytochrome b561 domain. The Extracellular portion of the chain corresponds to 35 to 50 (RGGLAIEATNKNLIFN). The helical transmembrane segment at 51-71 (VHPVLMLIGYIIIGGEAIMVY) threads the bilayer. H52 lines the heme b pocket. Position 67 to 75 (67 to 75 (AIMVYRVLP)) interacts with L-ascorbate. The Cytoplasmic portion of the chain corresponds to 72–84 (RVLPTSNHETNKL). A helical membrane pass occupies residues 85–105 (IHLVLHGIALVLGAVGIYFAF). H86 and H120 together coordinate heme b. Over 106-122 (KNHNESGIANLYSLHSW) the chain is Extracellular. Position 116–125 (116–125 (LYSLHSWIGI)) interacts with monodehydro-L-ascorbate radical. The helical transmembrane segment at 123–143 (IGIGTITLYGIQWIVGFVTFF) threads the bilayer. Over 144–153 (FPGAAPNVKK) the chain is Cytoplasmic. The chain crosses the membrane as a helical span at residues 154-174 (GVLPWHILFGLFVYILALANA). H159 contacts heme b. Over 175–201 (ELGFLEKLTFLESSGLDKYGTEAFLVN) the chain is Extracellular. Residues 202–222 (FTALVVVLFGASVVVAAIAPV) traverse the membrane as a helical segment. At 223-236 (RLEEPQGYVPIPEN) the chain is on the cytoplasmic side.

Requires heme b as cofactor.

It is found in the membrane. Functionally, two-heme-containing cytochrome. Catalyzes ascorbate-dependent trans-membrane electron transfer by utilizing a concerted H(+)/e(-) transfer mechanism. This Zea mays (Maize) protein is Ascorbate-specific transmembrane electron transporter 2.